Reading from the N-terminus, the 282-residue chain is Bifunctional protein FolD (282 aa).

NADP(+) is bound by residues 165–167, Ser190, and Ile231; that span reads NRS.

Belongs to the tetrahydrofolate dehydrogenase/cyclohydrolase family. In terms of assembly, homodimer.

It carries out the reaction (6R)-5,10-methylene-5,6,7,8-tetrahydrofolate + NADP(+) = (6R)-5,10-methenyltetrahydrofolate + NADPH. The catalysed reaction is (6R)-5,10-methenyltetrahydrofolate + H2O = (6R)-10-formyltetrahydrofolate + H(+). It participates in one-carbon metabolism; tetrahydrofolate interconversion. Functionally, catalyzes the oxidation of 5,10-methylenetetrahydrofolate to 5,10-methenyltetrahydrofolate and then the hydrolysis of 5,10-methenyltetrahydrofolate to 10-formyltetrahydrofolate. This Clostridium botulinum (strain 657 / Type Ba4) protein is Bifunctional protein FolD.